We begin with the raw amino-acid sequence, 307 residues long: Serine/threonine-protein phosphatase PP2A-2 catalytic subunit (307 aa).

Residues D55, H57, D83, and N115 each contribute to the Mn(2+) site. Residue H116 is the Proton donor of the active site. Mn(2+)-binding residues include H165 and H239.

This sequence belongs to the PPP phosphatase family. PP-2A subfamily. It depends on Mn(2+) as a cofactor.

It is found in the cytoplasm. It carries out the reaction O-phospho-L-seryl-[protein] + H2O = L-seryl-[protein] + phosphate. The enzyme catalyses O-phospho-L-threonyl-[protein] + H2O = L-threonyl-[protein] + phosphate. The sequence is that of Serine/threonine-protein phosphatase PP2A-2 catalytic subunit (PP2A2) from Oryza sativa subsp. indica (Rice).